A 322-amino-acid chain; its full sequence is Lactamase-like protein nscB (322 aa).

Zn(2+) contacts are provided by His-97, His-99, Asp-101, and His-102. Asp-101 (proton donor/acceptor) is an active-site residue.

It belongs to the metallo-beta-lactamase superfamily. The cofactor is Zn(2+).

It functions in the pathway secondary metabolite biosynthesis. Lactamase-like protein; part of the gene cluster that mediates the biosynthesis of neosartoricin B, a prenylated anthracenone that probably exhibits T-cell antiproliferative activity, suggestive of a physiological role as an immunosuppressive agent. The non-reducing polyketide synthase nscA probably synthesizes and cyclizes the decaketide backbone. The hydrolase nscB then mediates the product release through hydrolysis followed by spontaneous decarboxylation. The prenyltransferase nscD catalyzes the addition of the dimethylallyl group to the aromatic C5. The FAD-dependent monooxygenase nscC is then responsible for the stereospecific hydroxylation at C2. Neosartoricin B can be converted into two additional compounds neosartoricins C and D. Neosartoricin C is a spirocyclic compound that is cyclized through the attack of C3 hydroxyl on C14, followed by dehydration. On the other hand, neosartoricin D is a further cyclized compound in which attack of C2 on C14 in neosartoricin C results in the formation of the acetal-containing dioxabicyclo-octanone ring. Both of these compounds are novel and possibly represent related metabolites of the gene cluster. The sequence is that of Lactamase-like protein nscB from Trichophyton rubrum (strain ATCC MYA-4607 / CBS 118892) (Athlete's foot fungus).